Here is a 343-residue protein sequence, read N- to C-terminus: Plasminogen (343 aa).

2 Kringle domains span residues 1-17 (APQAPSVENPPEADCML) and 41-120 (AQEP…GCVA). A plasmin heavy chain A region spans residues 1 to 140 (APQAPSVENP…LRRRSREHFC (140 aa)). Disulfide bonds link Cys15–Cys94, Cys36–Cys77, and Cys65–Cys89. The Peptidase S1 domain occupies 114–341 (VVGGCVATPH…YVPWIEETMR (228 aa)). Ser130 bears the Phosphoserine mark. A disulfide bridge connects residues Cys140 and Cys156. A plasmin light chain B region spans residues 141–343 (GGTLISPEWV…PWIEETMRRY (203 aa)). Active-site charge relay system residues include His155 and Asp198. Ser221 carries the post-translational modification Phosphoserine. Disulfide bonds link Cys232–Cys299, Cys262–Cys278, and Cys289–Cys317. The Charge relay system role is filled by Ser293.

This sequence belongs to the peptidase S1 family. Plasminogen subfamily. In terms of assembly, interacts with CSPG4 and AMOT. Interacts (via the Kringle domains) with HRG; the interaction tethers PLG to the cell surface and enhances its activation. Interacts (via Kringle 4 domain) with ADA; the interaction stimulates PLG activation when in complex with DPP4. Angiostatin: Interacts with ATP5F1A; the interaction inhibits most of the angiogenic effects of angiostatin.

It localises to the secreted. The enzyme catalyses Preferential cleavage: Lys-|-Xaa &gt; Arg-|-Xaa, higher selectivity than trypsin. Converts fibrin into soluble products.. Converted into plasmin by plasminogen activators, both plasminogen and its activator being bound to fibrin. Cannot be activated with streptokinase. Plasmin dissolves the fibrin of blood clots and acts as a proteolytic factor in a variety of other processes including embryonic development, tissue remodeling, tumor invasion, and inflammation. In ovulation, weakens the walls of the Graafian follicle. It activates the urokinase-type plasminogen activator, collagenases and several complement zymogens, such as C1, C4 and C5. Cleavage of fibronectin and laminin leads to cell detachment and apoptosis. Also cleaves fibrin, thrombospondin and von Willebrand factor. Its role in tissue remodeling and tumor invasion may be modulated by CSPG4. Binds to cells. This is Plasminogen (PLG) from Ovis aries (Sheep).